Consider the following 180-residue polypeptide: ATP synthase subunit delta (180 aa).

It belongs to the ATPase delta chain family. F-type ATPases have 2 components, F(1) - the catalytic core - and F(0) - the membrane proton channel. F(1) has five subunits: alpha(3), beta(3), gamma(1), delta(1), epsilon(1). F(0) has three main subunits: a(1), b(2) and c(10-14). The alpha and beta chains form an alternating ring which encloses part of the gamma chain. F(1) is attached to F(0) by a central stalk formed by the gamma and epsilon chains, while a peripheral stalk is formed by the delta and b chains.

It localises to the cell inner membrane. Its function is as follows. F(1)F(0) ATP synthase produces ATP from ADP in the presence of a proton or sodium gradient. F-type ATPases consist of two structural domains, F(1) containing the extramembraneous catalytic core and F(0) containing the membrane proton channel, linked together by a central stalk and a peripheral stalk. During catalysis, ATP synthesis in the catalytic domain of F(1) is coupled via a rotary mechanism of the central stalk subunits to proton translocation. This protein is part of the stalk that links CF(0) to CF(1). It either transmits conformational changes from CF(0) to CF(1) or is implicated in proton conduction. The sequence is that of ATP synthase subunit delta from Trichlorobacter lovleyi (strain ATCC BAA-1151 / DSM 17278 / SZ) (Geobacter lovleyi).